Here is a 492-residue protein sequence, read N- to C-terminus: Transcription factor IIIB 60 kDa subunit (492 aa).

Residues methionine 1–glutamate 30 form a TFIIB-type zinc finger. Positions 3, 6, 22, and 25 each coordinate Zn(2+). The interval glutamine 440–methionine 468 is disordered.

Belongs to the TFIIB family. TFIIIB comprises the TATA-binding protein (TBP), the B-related factor (BRF) and a third subunit (Potential). Interacts with maf1.

Its subcellular location is the nucleus. Its function is as follows. General activator of RNA polymerase III transcription. The protein is Transcription factor IIIB 60 kDa subunit (brf1) of Schizosaccharomyces pombe (strain 972 / ATCC 24843) (Fission yeast).